The chain runs to 302 residues: tRNA-cytidine(32) 2-sulfurtransferase (302 aa).

The short motif at 45–50 (SGGKDS) is the PP-loop motif element. [4Fe-4S] cluster is bound by residues Cys-120, Cys-123, and Cys-211.

This sequence belongs to the TtcA family. In terms of assembly, homodimer. Mg(2+) serves as cofactor. [4Fe-4S] cluster is required as a cofactor.

Its subcellular location is the cytoplasm. The catalysed reaction is cytidine(32) in tRNA + S-sulfanyl-L-cysteinyl-[cysteine desulfurase] + AH2 + ATP = 2-thiocytidine(32) in tRNA + L-cysteinyl-[cysteine desulfurase] + A + AMP + diphosphate + H(+). It participates in tRNA modification. Its function is as follows. Catalyzes the ATP-dependent 2-thiolation of cytidine in position 32 of tRNA, to form 2-thiocytidine (s(2)C32). The sulfur atoms are provided by the cysteine/cysteine desulfurase (IscS) system. The polypeptide is tRNA-cytidine(32) 2-sulfurtransferase (Aeromonas salmonicida (strain A449)).